A 247-amino-acid chain; its full sequence is MNVLSYSINPLKGLYAISGVEVGQHFYWQIGGFQIHGQVLITSWVVIAILLGSAAIAVRSPQTIPTGGQNFFEYVLEFIRDVSKTQIGEEYRPWVPFIGTMFLFIFVSNWSGALLPWKIIQLPHGELAAPTNDINTTVALALLTSVAYFYAGLTKKGLGYFGKYIQPTPILLPINILEDFTKPLSLSFRLFGNILADELVVVVLVSLVPLVVPIPVMFLGLFTSGIQALIFATLAAAYIGESLEGHH.

5 helical membrane-spanning segments follow: residues Gln38–Val58, Val95–Leu115, Ile134–Thr154, Leu199–Leu219, and Gly220–Gly240.

The protein belongs to the ATPase A chain family. As to quaternary structure, F-type ATPases have 2 components, CF(1) - the catalytic core - and CF(0) - the membrane proton channel. CF(1) has five subunits: alpha(3), beta(3), gamma(1), delta(1), epsilon(1). CF(0) has four main subunits: a, b, b' and c.

The protein resides in the plastid. It localises to the chloroplast thylakoid membrane. Its function is as follows. Key component of the proton channel; it plays a direct role in the translocation of protons across the membrane. The sequence is that of ATP synthase subunit a, chloroplastic (atpI) from Spinacia oleracea (Spinach).